Reading from the N-terminus, the 669-residue chain is Glutamate--cysteine ligase (669 aa).

The protein belongs to the glutamate--cysteine ligase type 3 family. In terms of assembly, heterodimer of a catalytic heavy chain and a regulatory light chain.

The catalysed reaction is L-cysteine + L-glutamate + ATP = gamma-L-glutamyl-L-cysteine + ADP + phosphate + H(+). The protein operates within sulfur metabolism; glutathione biosynthesis; glutathione from L-cysteine and L-glutamate: step 1/2. Its function is as follows. Catalyzes the ATP-dependent ligation of L-glutamate and L-cysteine and participates in the first and rate-limiting step in glutathione biosynthesis. The chain is Glutamate--cysteine ligase (gcs1) from Schizosaccharomyces pombe (strain 972 / ATCC 24843) (Fission yeast).